A 332-amino-acid polypeptide reads, in one-letter code: Azadirone synthase LFS (332 aa).

In terms of domain architecture, Fe2OG dioxygenase spans 181 to 286 (ANANYTNMFH…RYSTGTFICP (106 aa)). Fe cation-binding residues include histidine 208, aspartate 210, and histidine 269. Residue arginine 277 coordinates 2-oxoglutarate.

Belongs to the iron/ascorbate-dependent oxidoreductase family. Fe(2+) is required as a cofactor. In terms of tissue distribution, mainly expressed in petioles and, to a lower extent, in roots.

It catalyses the reaction (1S,3bR,4R,5aR,9aR,9bR,11aS)-1-(1-hydroxy-4-oxobutan-2-yl)-3b,6,6,9a,11a-pentamethyl-7-oxo-1H,2H,3bH,4H,5H,5aH,6H,7H,9aH,9bH,10H,11H,11aH-cyclopenta[a]phenanthren-4-yl acetate + 2-oxoglutarate + O2 = azadirone + succinate + CO2 + 2 H2O. It functions in the pathway secondary metabolite biosynthesis; terpenoid biosynthesis. Functionally, 2-oxoglutarate-Fe(II) type oxidoreductase involved in the biosynthesis of limonoids triterpene natural products such as azadirachtin, an antifeedant widely used as bioinsecticide, and possessing many medicinal applications including anti-tumoral, anti-malarial, anti-rheumatic, antibacterial, anti-inflammatory, anti-pyretic and diuretic effects. Catalyzes the formation of azadirone. In Melia azedarach (Chinaberry tree), this protein is Azadirone synthase LFS.